A 470-amino-acid chain; its full sequence is Siroheme synthase (470 aa).

Residues 1-203 (MDYLPIFVEL…GQIQQAEKQL (203 aa)) are precorrin-2 dehydrogenase /sirohydrochlorin ferrochelatase. Residues 22–23 (EV) and 43–44 (PE) contribute to the NAD(+) site. Serine 128 carries the phosphoserine modification. Residues 214–470 (GELALVGAGP…ISRPAVVDFA (257 aa)) are uroporphyrinogen-III C-methyltransferase. Proline 223 serves as a coordination point for S-adenosyl-L-methionine. Aspartate 246 acts as the Proton acceptor in catalysis. Catalysis depends on lysine 268, which acts as the Proton donor. S-adenosyl-L-methionine is bound by residues 299-301 (GGD), isoleucine 304, 329-330 (TA), methionine 381, and glycine 410.

This sequence in the N-terminal section; belongs to the precorrin-2 dehydrogenase / sirohydrochlorin ferrochelatase family. In the C-terminal section; belongs to the precorrin methyltransferase family.

The catalysed reaction is uroporphyrinogen III + 2 S-adenosyl-L-methionine = precorrin-2 + 2 S-adenosyl-L-homocysteine + H(+). The enzyme catalyses precorrin-2 + NAD(+) = sirohydrochlorin + NADH + 2 H(+). It carries out the reaction siroheme + 2 H(+) = sirohydrochlorin + Fe(2+). The protein operates within cofactor biosynthesis; adenosylcobalamin biosynthesis; precorrin-2 from uroporphyrinogen III: step 1/1. Its pathway is cofactor biosynthesis; adenosylcobalamin biosynthesis; sirohydrochlorin from precorrin-2: step 1/1. It functions in the pathway porphyrin-containing compound metabolism; siroheme biosynthesis; precorrin-2 from uroporphyrinogen III: step 1/1. It participates in porphyrin-containing compound metabolism; siroheme biosynthesis; siroheme from sirohydrochlorin: step 1/1. The protein operates within porphyrin-containing compound metabolism; siroheme biosynthesis; sirohydrochlorin from precorrin-2: step 1/1. Multifunctional enzyme that catalyzes the SAM-dependent methylations of uroporphyrinogen III at position C-2 and C-7 to form precorrin-2 via precorrin-1. Then it catalyzes the NAD-dependent ring dehydrogenation of precorrin-2 to yield sirohydrochlorin. Finally, it catalyzes the ferrochelation of sirohydrochlorin to yield siroheme. The polypeptide is Siroheme synthase (Photorhabdus laumondii subsp. laumondii (strain DSM 15139 / CIP 105565 / TT01) (Photorhabdus luminescens subsp. laumondii)).